The chain runs to 440 residues: tRNA modification GTPase MnmE (440 aa).

Positions 23, 80, and 120 each coordinate (6S)-5-formyl-5,6,7,8-tetrahydrofolate. Positions 217–366 (GLKIVIAGEP…LLAMLQAHLP (150 aa)) constitute a TrmE-type G domain. N227 is a binding site for K(+). GTP-binding positions include 227 to 232 (NAGKSS), 246 to 252 (TEIAGTT), and 271 to 274 (DTAG). S231 lines the Mg(2+) pocket. Residues T246, I248, and T251 each contribute to the K(+) site. T252 is a Mg(2+) binding site. Residue K440 coordinates (6S)-5-formyl-5,6,7,8-tetrahydrofolate.

Belongs to the TRAFAC class TrmE-Era-EngA-EngB-Septin-like GTPase superfamily. TrmE GTPase family. Homodimer. Heterotetramer of two MnmE and two MnmG subunits. Requires K(+) as cofactor.

It localises to the cytoplasm. Functionally, exhibits a very high intrinsic GTPase hydrolysis rate. Involved in the addition of a carboxymethylaminomethyl (cmnm) group at the wobble position (U34) of certain tRNAs, forming tRNA-cmnm(5)s(2)U34. The protein is tRNA modification GTPase MnmE of Sinorhizobium medicae (strain WSM419) (Ensifer medicae).